A 364-amino-acid chain; its full sequence is Caffeic acid 3-O-methyltransferase (364 aa).

Residue 131 to 137 coordinates substrate; sequence MNQDKVL. Residues 163–181 are substrate binding; it reads AFEYHGTDSRFNRVFNEGM. Residues Gly209, Asp232, Asp252, Met253, and Lys266 each coordinate S-adenosyl-L-methionine. The active-site Proton acceptor is His270.

Belongs to the class I-like SAM-binding methyltransferase superfamily. Cation-independent O-methyltransferase family. COMT subfamily. As to quaternary structure, homodimer. As to expression, confined to the vascular tissues of organs undergoing lignification such as stems and roots.

The enzyme catalyses (E)-caffeate + S-adenosyl-L-methionine = (E)-ferulate + S-adenosyl-L-homocysteine + H(+). It catalyses the reaction tricetin + 2 S-adenosyl-L-methionine = 3',5'-di-O-methyltricetin + 2 S-adenosyl-L-homocysteine + 2 H(+). It carries out the reaction luteolin + S-adenosyl-L-methionine = chrysoeriol + S-adenosyl-L-homocysteine + H(+). The catalysed reaction is tricetin + S-adenosyl-L-methionine = 3'-O-methyltricetin + S-adenosyl-L-homocysteine + H(+). It functions in the pathway aromatic compound metabolism; phenylpropanoid biosynthesis. Functionally, catalyzes the conversion of caffeic acid to ferulic acid and of 5-hydroxyferulic acid to sinapic acid. The resulting products may subsequently be converted to the corresponding alcohols that are incorporated into lignins. Can use the flavone tricetin (5,7,3',4',5'-pentahydroxyflavone) as the preferred substrate and give rise to its 3',5'-dimethyl derivative, tricin (3',5'-dimethoxy-5,7,4'-trihydroxyflavone), as the major product, and selgin to a lower extent. Tricin exhibits potential benefits for human health including relaxant effect on smooth muscle of intestinal tissues, antioxidant effect, antihistaminic activity, and growth inhibition of human malignant breast tumor cells and colon cancer cells. Can also use luteolin, quercetin and 5-hydroxyferulic acid (5HF) as substrates. In Zea mays (Maize), this protein is Caffeic acid 3-O-methyltransferase.